We begin with the raw amino-acid sequence, 454 residues long: GTPase Der (454 aa).

2 EngA-type G domains span residues 4 to 168 (PQVA…PEKD) and 178 to 352 (MKIA…KQAQ). GTP is bound by residues 10 to 17 (GRPNVGKS), 57 to 61 (DTGGM), 120 to 123 (NKAD), 184 to 191 (GRRNVGKS), 231 to 235 (DTPGL), and 296 to 299 (NKWD). Positions 353-437 (SRVSTGELNR…PIKLYMQQRS (85 aa)) constitute a KH-like domain.

It belongs to the TRAFAC class TrmE-Era-EngA-EngB-Septin-like GTPase superfamily. EngA (Der) GTPase family. Associates with the 50S ribosomal subunit.

In terms of biological role, GTPase that plays an essential role in the late steps of ribosome biogenesis. In Rhodopirellula baltica (strain DSM 10527 / NCIMB 13988 / SH1), this protein is GTPase Der.